Consider the following 133-residue polypeptide: Transcription antitermination protein NusB (133 aa).

Belongs to the NusB family.

Functionally, involved in transcription antitermination. Required for transcription of ribosomal RNA (rRNA) genes. Binds specifically to the boxA antiterminator sequence of the ribosomal RNA (rrn) operons. The sequence is that of Transcription antitermination protein NusB from Shouchella clausii (strain KSM-K16) (Alkalihalobacillus clausii).